Reading from the N-terminus, the 126-residue chain is Small ribosomal subunit protein uS13 (126 aa).

Residues 94-126 (RGLPVHGQRTSTNARTRKGPRRAIAGKKKPGKK) form a disordered region. The span at 108 to 126 (RTRKGPRRAIAGKKKPGKK) shows a compositional bias: basic residues.

Belongs to the universal ribosomal protein uS13 family. As to quaternary structure, part of the 30S ribosomal subunit. Forms a loose heterodimer with protein S19. Forms two bridges to the 50S subunit in the 70S ribosome.

Located at the top of the head of the 30S subunit, it contacts several helices of the 16S rRNA. In the 70S ribosome it contacts the 23S rRNA (bridge B1a) and protein L5 of the 50S subunit (bridge B1b), connecting the 2 subunits; these bridges are implicated in subunit movement. Contacts the tRNAs in the A and P-sites. This Streptomyces avermitilis (strain ATCC 31267 / DSM 46492 / JCM 5070 / NBRC 14893 / NCIMB 12804 / NRRL 8165 / MA-4680) protein is Small ribosomal subunit protein uS13.